Consider the following 611-residue polypeptide: Aspartate--tRNA(Asp/Asn) ligase (611 aa).

Residue Glu-177 coordinates L-aspartate. The interval 201–204 is aspartate; the sequence is QLFK. Residue Arg-223 participates in L-aspartate binding. ATP contacts are provided by residues 223-225 and Gln-232; that span reads RDE. His-461 serves as a coordination point for L-aspartate. Residue Glu-499 participates in ATP binding. An L-aspartate-binding site is contributed by Arg-506. 551-554 lines the ATP pocket; sequence GVDR.

It belongs to the class-II aminoacyl-tRNA synthetase family. Type 1 subfamily. As to quaternary structure, homodimer.

It localises to the cytoplasm. The enzyme catalyses tRNA(Asx) + L-aspartate + ATP = L-aspartyl-tRNA(Asx) + AMP + diphosphate. Functionally, aspartyl-tRNA synthetase with relaxed tRNA specificity since it is able to aspartylate not only its cognate tRNA(Asp) but also tRNA(Asn). Reaction proceeds in two steps: L-aspartate is first activated by ATP to form Asp-AMP and then transferred to the acceptor end of tRNA(Asp/Asn). This chain is Aspartate--tRNA(Asp/Asn) ligase, found in Synechococcus sp. (strain WH7803).